A 760-amino-acid polypeptide reads, in one-letter code: E4 SUMO-protein ligase PIAL2 (760 aa).

Positions 143–301 are interacting domain (IND), required for interaction with MOM1 and PIAL1; the sequence is IKSPGSTFSQ…GVIEASPDSD (159 aa). An SP-RING-type zinc finger spans residues 298–379; the sequence is PDSDIIEGPS…MAKILKDVEH (82 aa). Zn(2+)-binding residues include C329, H331, C352, and C355. The segment covering 440 to 450 has biased composition (basic and acidic residues); that stretch reads GDNKVEDRKPC. Disordered regions lie at residues 440-471, 492-522, 631-657, and 699-760; these read GDNKVEDRKPCMSDAQGQSNNNNTNKHPSNDD, LGNTAPQPHQASNTGTGQQYSNLSQIPMSID, GVRGLTSSHASTSRQHPSGPTVQSVSR, and SQQS…GPTS. Polar residues-rich tracts occupy residues 492-518, 631-653, and 699-729; these read LGNTAPQPHQASNTGTGQQYSNLSQIP, GVRGLTSSHASTSRQHPSGPTVQ, and SQQSQTSTRLNSSQPVQTPSVQTSQAQSPFT.

This sequence belongs to the PIAL protein ligase family. In terms of assembly, homodimer. Interacts with MOM1 and PIAL1 to form a high molecular mass complex which mediates transcriptional silencing at heterochromatin regions. Expressed in leaves, stems and flowers, and, at low levels, in siliques and old leaves.

It is found in the nucleus. The protein operates within protein modification; protein sumoylation. Together with MOM1 and PIAL1, regulates transcriptional gene silencing (TGS) independently of changes in DNA methylation. E4-type SUMO ligase that promotes SUMO chain formation in a SCE1-dependent manner and thus contributes to a pathway for proteolytic removal of sumoylation substrates. Involved in stress responses and sulfur metabolism. This Arabidopsis thaliana (Mouse-ear cress) protein is E4 SUMO-protein ligase PIAL2.